The chain runs to 34 residues: Potassium channel toxin (34 aa).

Disulfide bonds link cysteine 6-cysteine 25, cysteine 11-cysteine 29, and cysteine 15-cysteine 31.

It belongs to the short scorpion toxin superfamily. Potassium channel inhibitor family. Alpha-KTx 21 subfamily. As to expression, expressed by the venom gland.

It is found in the secreted. Its function is as follows. Toxin that blocks voltage-gated potassium channels (Kv). In Tityus metuendus (Scorpion), this protein is Potassium channel toxin.